The primary structure comprises 318 residues: 4-hydroxy-3-methylbut-2-enyl diphosphate reductase (318 aa).

Position 12 (Cys-12) interacts with [4Fe-4S] cluster. Positions 41 and 74 each coordinate (2E)-4-hydroxy-3-methylbut-2-enyl diphosphate. Positions 41 and 74 each coordinate dimethylallyl diphosphate. His-41 and His-74 together coordinate isopentenyl diphosphate. Cys-96 contacts [4Fe-4S] cluster. His-124 contacts (2E)-4-hydroxy-3-methylbut-2-enyl diphosphate. His-124 contributes to the dimethylallyl diphosphate binding site. His-124 is an isopentenyl diphosphate binding site. Residue Glu-126 is the Proton donor of the active site. Residue Thr-167 participates in (2E)-4-hydroxy-3-methylbut-2-enyl diphosphate binding. Residue Cys-197 coordinates [4Fe-4S] cluster. The (2E)-4-hydroxy-3-methylbut-2-enyl diphosphate site is built by Ser-225, Ser-226, Asn-227, and Ser-269. Dimethylallyl diphosphate is bound by residues Ser-225, Ser-226, Asn-227, and Ser-269. Isopentenyl diphosphate-binding residues include Ser-225, Ser-226, Asn-227, and Ser-269.

It belongs to the IspH family. The cofactor is [4Fe-4S] cluster.

The enzyme catalyses isopentenyl diphosphate + 2 oxidized [2Fe-2S]-[ferredoxin] + H2O = (2E)-4-hydroxy-3-methylbut-2-enyl diphosphate + 2 reduced [2Fe-2S]-[ferredoxin] + 2 H(+). It catalyses the reaction dimethylallyl diphosphate + 2 oxidized [2Fe-2S]-[ferredoxin] + H2O = (2E)-4-hydroxy-3-methylbut-2-enyl diphosphate + 2 reduced [2Fe-2S]-[ferredoxin] + 2 H(+). Its pathway is isoprenoid biosynthesis; dimethylallyl diphosphate biosynthesis; dimethylallyl diphosphate from (2E)-4-hydroxy-3-methylbutenyl diphosphate: step 1/1. It functions in the pathway isoprenoid biosynthesis; isopentenyl diphosphate biosynthesis via DXP pathway; isopentenyl diphosphate from 1-deoxy-D-xylulose 5-phosphate: step 6/6. Its function is as follows. Catalyzes the conversion of 1-hydroxy-2-methyl-2-(E)-butenyl 4-diphosphate (HMBPP) into a mixture of isopentenyl diphosphate (IPP) and dimethylallyl diphosphate (DMAPP). Acts in the terminal step of the DOXP/MEP pathway for isoprenoid precursor biosynthesis. The polypeptide is 4-hydroxy-3-methylbut-2-enyl diphosphate reductase (Francisella tularensis subsp. mediasiatica (strain FSC147)).